The sequence spans 175 residues: MADQDQTNQQAGSDAPSFNLQRVYLKDLSLEMPNAPHVFLEQEAPQVEVSINVGGQRLAETVFESTVTVTVTTRVNDKVLYLVEGTQAGIFELANIPAEQMDPLLGIVCPTMLYPYLRANVADAITRTSLPALHLAEVNFQALYEQRLAEMAQQQPDAANGNDSGIILPPGATRQ.

Polar residues predominate over residues 153–163 (QQQPDAANGND). Residues 153 to 175 (QQQPDAANGNDSGIILPPGATRQ) are disordered.

It belongs to the SecB family. In terms of assembly, homotetramer, a dimer of dimers. One homotetramer interacts with 1 SecA dimer.

It localises to the cytoplasm. One of the proteins required for the normal export of preproteins out of the cell cytoplasm. It is a molecular chaperone that binds to a subset of precursor proteins, maintaining them in a translocation-competent state. It also specifically binds to its receptor SecA. This Bordetella bronchiseptica (strain ATCC BAA-588 / NCTC 13252 / RB50) (Alcaligenes bronchisepticus) protein is Protein-export protein SecB.